We begin with the raw amino-acid sequence, 409 residues long: Histidine--tRNA ligase (409 aa).

The protein belongs to the class-II aminoacyl-tRNA synthetase family.

It is found in the cytoplasm. It catalyses the reaction tRNA(His) + L-histidine + ATP = L-histidyl-tRNA(His) + AMP + diphosphate + H(+). The polypeptide is Histidine--tRNA ligase (hisS) (Archaeoglobus fulgidus (strain ATCC 49558 / DSM 4304 / JCM 9628 / NBRC 100126 / VC-16)).